We begin with the raw amino-acid sequence, 200 residues long: Cytochrome c biogenesis ATP-binding export protein CcmA (200 aa).

The ABC transporter domain maps to 2-200; the sequence is LDVIELDFDY…NKADYEEYHL (199 aa). 34–41 lines the ATP pocket; that stretch reads GSNGAGKT.

Belongs to the ABC transporter superfamily. CcmA exporter (TC 3.A.1.107) family. As to quaternary structure, the complex is composed of two ATP-binding proteins (CcmA) and two transmembrane proteins (CcmB).

It localises to the cell inner membrane. The catalysed reaction is heme b(in) + ATP + H2O = heme b(out) + ADP + phosphate + H(+). Part of the ABC transporter complex CcmAB involved in the biogenesis of c-type cytochromes; once thought to export heme, this seems not to be the case, but its exact role is uncertain. Responsible for energy coupling to the transport system. In Legionella pneumophila, this protein is Cytochrome c biogenesis ATP-binding export protein CcmA.